Consider the following 144-residue polypeptide: Universal stress protein F (144 aa).

Belongs to the universal stress protein A family. In terms of assembly, homodimer.

The protein is Universal stress protein F (uspF) of Salmonella typhi.